The following is a 136-amino-acid chain: Protein NrdI (136 aa).

This sequence belongs to the NrdI family.

Functionally, probably involved in ribonucleotide reductase function. This Escherichia coli O127:H6 (strain E2348/69 / EPEC) protein is Protein NrdI.